We begin with the raw amino-acid sequence, 83 residues long: Toxin CjTL8 (83 aa).

Residues 1-20 (MSSAIKILALLMVLVALAQA) form the signal peptide. Residues 21–44 (KPRKDYRAYPDFDDKSVILEDDKR) constitute a propeptide that is removed on maturation. F81 bears the Phenylalanine amide mark.

Contains 3 disulfide bonds.

The protein localises to the secreted. The protein resides in the nematocyst. Its function is as follows. In vivo, induces immediate paralysis on shrimps (C.multidentata), followed by death when high doses are injected. No activity is observed when injected into fly larvae (M.domestica). This Epiactis japonica (Sea anemone) protein is Toxin CjTL8.